Consider the following 153-residue polypeptide: Small ribosomal subunit protein eS19 (153 aa).

Disordered stretches follow at residues 77–99 (YGTSKQGTTRYRVRPHQKTKGSG) and 113–139 (GYVETSENDGRRVTGDGRSLLDDTAGD). Residues 120–133 (NDGRRVTGDGRSLL) show a composition bias toward basic and acidic residues.

The protein belongs to the eukaryotic ribosomal protein eS19 family. In terms of assembly, part of the 30S ribosomal subunit.

May be involved in maturation of the 30S ribosomal subunit. In Haloarcula marismortui (strain ATCC 43049 / DSM 3752 / JCM 8966 / VKM B-1809) (Halobacterium marismortui), this protein is Small ribosomal subunit protein eS19.